The chain runs to 647 residues: DNA mismatch repair protein MutL (647 aa).

Positions 393 to 423 (VSLVANKQQPTVKQAKRSADDSDSEHGKLDY) are disordered. Residues 409 to 423 (RSADDSDSEHGKLDY) are compositionally biased toward basic and acidic residues.

This sequence belongs to the DNA mismatch repair MutL/HexB family.

In terms of biological role, this protein is involved in the repair of mismatches in DNA. It is required for dam-dependent methyl-directed DNA mismatch repair. May act as a 'molecular matchmaker', a protein that promotes the formation of a stable complex between two or more DNA-binding proteins in an ATP-dependent manner without itself being part of a final effector complex. The protein is DNA mismatch repair protein MutL of Streptococcus thermophilus (strain CNRZ 1066).